We begin with the raw amino-acid sequence, 249 residues long: 1-(5-phosphoribosyl)-5-[(5-phosphoribosylamino)methylideneamino] imidazole-4-carboxamide isomerase (249 aa).

The active-site Proton acceptor is aspartate 10. The active-site Proton donor is the aspartate 136.

This sequence belongs to the HisA/HisF family.

Its subcellular location is the cytoplasm. The catalysed reaction is 1-(5-phospho-beta-D-ribosyl)-5-[(5-phospho-beta-D-ribosylamino)methylideneamino]imidazole-4-carboxamide = 5-[(5-phospho-1-deoxy-D-ribulos-1-ylimino)methylamino]-1-(5-phospho-beta-D-ribosyl)imidazole-4-carboxamide. The protein operates within amino-acid biosynthesis; L-histidine biosynthesis; L-histidine from 5-phospho-alpha-D-ribose 1-diphosphate: step 4/9. The sequence is that of 1-(5-phosphoribosyl)-5-[(5-phosphoribosylamino)methylideneamino] imidazole-4-carboxamide isomerase from Symbiobacterium thermophilum (strain DSM 24528 / JCM 14929 / IAM 14863 / T).